Reading from the N-terminus, the 609-residue chain is DNA mismatch repair protein MutL (609 aa).

Positions 364 to 386 (SVNSKPTDYRPAMSPSFKSTPNT) are disordered.

Belongs to the DNA mismatch repair MutL/HexB family.

Its function is as follows. This protein is involved in the repair of mismatches in DNA. It is required for dam-dependent methyl-directed DNA mismatch repair. May act as a 'molecular matchmaker', a protein that promotes the formation of a stable complex between two or more DNA-binding proteins in an ATP-dependent manner without itself being part of a final effector complex. This Rickettsia akari (strain Hartford) protein is DNA mismatch repair protein MutL.